Reading from the N-terminus, the 350-residue chain is Putative F-box protein At1g23770 (350 aa).

A compositionally biased stretch (polar residues) spans 1-15; that stretch reads MDTGFADSNNDSSPG. A disordered region spans residues 1-29; it reads MDTGFADSNNDSSPGEGSKRGNSGIEGPV. The region spanning 206–252 is the F-box domain; that stretch reads PPCLMLLPTELKLKILELLPGVSIGYMACVCTEMRYLASDNDLWEHK.

The sequence is that of Putative F-box protein At1g23770 from Arabidopsis thaliana (Mouse-ear cress).